The following is a 175-amino-acid chain: Large ribosomal subunit protein uL10 (175 aa).

The protein belongs to the universal ribosomal protein uL10 family. As to quaternary structure, part of the ribosomal stalk of the 50S ribosomal subunit. The N-terminus interacts with L11 and the large rRNA to form the base of the stalk. The C-terminus forms an elongated spine to which L12 dimers bind in a sequential fashion forming a multimeric L10(L12)X complex.

Functionally, forms part of the ribosomal stalk, playing a central role in the interaction of the ribosome with GTP-bound translation factors. The chain is Large ribosomal subunit protein uL10 from Mycobacterium sp. (strain JLS).